Here is a 152-residue protein sequence, read N- to C-terminus: Interleukin-1 family member 10 (152 aa).

Belongs to the IL-1 family. As to quaternary structure, interacts with cargo receptor TMED10; the interaction mediates the translocation from the cytoplasm into the ERGIC (endoplasmic reticulum-Golgi intermediate compartment) and thereby secretion. As to expression, expressed in fetal skin, spleen and tonsil. Expressed mostly in the basal epithelia of skin and in proliferating B-cells of the tonsil.

The protein localises to the cytoplasm. The protein resides in the secreted. Its function is as follows. Cytokine with immunomodulatory activity. Alone, does not induce cytokine production, but reduces IL22 and IL17A production by T-cells in response to heat-killed Candida albicans. Reduces IL36G-induced production of IL8 by peripheral blood mononuclear cells. Increases IL6 production by dendritic cells stimulated by bacterial lipopolysaccharides (LPS). Ligand for IL-36R/IL1RL2. The polypeptide is Interleukin-1 family member 10 (Homo sapiens (Human)).